A 241-amino-acid chain; its full sequence is Xyloglucan-specific endo-beta-1,4-glucanase 1 (241 aa).

Positions 1-19 are cleaved as a signal peptide; sequence MKGLLAGTIAAATFAVASA. The active site involves glutamate 136. N-linked (GlcNAc...) asparagine glycosylation is found at asparagine 174 and asparagine 190. Glutamate 222 is an active-site residue.

Belongs to the glycosyl hydrolase 12 (cellulase H) family. As to quaternary structure, interacts with host apoplastic glucanase inhibitor GIP2.

The catalysed reaction is xyloglucan + H2O = xyloglucan oligosaccharides.. With respect to regulation, the xyloglucanase activity is inhibited by the binding of the host apoplastic glucanase inhibitor GIP2. Functionally, glycoside hydrolase that exhibits xyloglucanase activity. Acts as an important virulence factor during P.parasitica infection of its host Nicotiana benthamiana. Also acts as a pathogen-associated molecular pattern (PAMP) in host species, where it can trigger defense responses including cell death. The PAMP activity is independent of its xyloglucanase activity. With paralog XLP1, is required to elevate apoplastic sugar during P.parasitica infection. In Phytophthora nicotianae (strain INRA-310) (Phytophthora parasitica), this protein is Xyloglucan-specific endo-beta-1,4-glucanase 1.